The chain runs to 367 residues: Glutamate 5-kinase (367 aa).

Lys-10 serves as a coordination point for ATP. Residues Ser-50, Asp-137, and Asn-149 each coordinate substrate. ATP-binding positions include Thr-169–Asp-170 and Thr-211–Lys-217. In terms of domain architecture, PUA spans Ala-275 to Glu-353.

The protein belongs to the glutamate 5-kinase family.

It is found in the cytoplasm. It carries out the reaction L-glutamate + ATP = L-glutamyl 5-phosphate + ADP. The protein operates within amino-acid biosynthesis; L-proline biosynthesis; L-glutamate 5-semialdehyde from L-glutamate: step 1/2. In terms of biological role, catalyzes the transfer of a phosphate group to glutamate to form L-glutamate 5-phosphate. This is Glutamate 5-kinase from Enterobacter sp. (strain 638).